We begin with the raw amino-acid sequence, 65 residues long: MQFKEVKAKSVEELHKLVNDLKAELWTLEFRNSTGSLEQTHKIPQLRKDIARALTALKQKEMETK.

Belongs to the universal ribosomal protein uL29 family.

The protein is Large ribosomal subunit protein uL29 of Mycoplasmopsis synoviae (strain 53) (Mycoplasma synoviae).